The following is a 71-amino-acid chain: MNRLLVFLMLGAAFMLVVSANDAYGDEPAFKDLNQGDESLGKRKSCCPCWLRGNCFWGQNCYPEGCSGPKV.

A signal peptide spans 1–20 (MNRLLVFLMLGAAFMLVVSA). The propeptide occupies 21-41 (NDAYGDEPAFKDLNQGDESLG). Disulfide bonds link Cys-46–Cys-61, Cys-47–Cys-55, and Cys-49–Cys-66.

The protein belongs to the sea anemone short toxin (type III) family.

Its subcellular location is the secreted. The protein resides in the nematocyst. Its function is as follows. Voltage-gated sodium channel (Nav) inhibitor. 1 uM completely inhibits insect voltage-gated sodium channel inactivation (DmNav1 from D.melanogaster). The polypeptide is Delta-actitoxin-Avd2b 2 (Anemonia viridis (Snakelocks anemone)).